A 386-amino-acid polypeptide reads, in one-letter code: Acetylornithine aminotransferase (386 aa).

Pyridoxal 5'-phosphate-binding positions include 96 to 97 (GA) and F123. R126 serves as a coordination point for N(2)-acetyl-L-ornithine. 208 to 211 (DEVQ) provides a ligand contact to pyridoxal 5'-phosphate. At K237 the chain carries N6-(pyridoxal phosphate)lysine. S265 is a binding site for N(2)-acetyl-L-ornithine. Residue T266 coordinates pyridoxal 5'-phosphate.

Belongs to the class-III pyridoxal-phosphate-dependent aminotransferase family. ArgD subfamily. Homodimer. Pyridoxal 5'-phosphate is required as a cofactor.

It localises to the cytoplasm. It carries out the reaction N(2)-acetyl-L-ornithine + 2-oxoglutarate = N-acetyl-L-glutamate 5-semialdehyde + L-glutamate. Its pathway is amino-acid biosynthesis; L-arginine biosynthesis; N(2)-acetyl-L-ornithine from L-glutamate: step 4/4. This Bacillus cereus (strain ATCC 14579 / DSM 31 / CCUG 7414 / JCM 2152 / NBRC 15305 / NCIMB 9373 / NCTC 2599 / NRRL B-3711) protein is Acetylornithine aminotransferase.